A 231-amino-acid polypeptide reads, in one-letter code: Lipoprotein-releasing system ATP-binding protein LolD 2 (231 aa).

The region spanning 6-230 (VEARSLSKSF…DGRLVGQDPA (225 aa)) is the ABC transporter domain. 42-49 (GPSGSGKS) contacts ATP.

This sequence belongs to the ABC transporter superfamily. Lipoprotein translocase (TC 3.A.1.125) family. In terms of assembly, the complex is composed of two ATP-binding proteins (LolD) and two transmembrane proteins (LolC and LolE).

The protein resides in the cell inner membrane. Part of the ABC transporter complex LolCDE involved in the translocation of mature outer membrane-directed lipoproteins, from the inner membrane to the periplasmic chaperone, LolA. Responsible for the formation of the LolA-lipoprotein complex in an ATP-dependent manner. This chain is Lipoprotein-releasing system ATP-binding protein LolD 2, found in Rhodospirillum rubrum (strain ATCC 11170 / ATH 1.1.1 / DSM 467 / LMG 4362 / NCIMB 8255 / S1).